A 212-amino-acid chain; its full sequence is ATP phosphoribosyltransferase (212 aa).

Belongs to the ATP phosphoribosyltransferase family. Short subfamily. As to quaternary structure, heteromultimer composed of HisG and HisZ subunits.

The protein resides in the cytoplasm. The enzyme catalyses 1-(5-phospho-beta-D-ribosyl)-ATP + diphosphate = 5-phospho-alpha-D-ribose 1-diphosphate + ATP. It functions in the pathway amino-acid biosynthesis; L-histidine biosynthesis; L-histidine from 5-phospho-alpha-D-ribose 1-diphosphate: step 1/9. Functionally, catalyzes the condensation of ATP and 5-phosphoribose 1-diphosphate to form N'-(5'-phosphoribosyl)-ATP (PR-ATP). Has a crucial role in the pathway because the rate of histidine biosynthesis seems to be controlled primarily by regulation of HisG enzymatic activity. This chain is ATP phosphoribosyltransferase, found in Clostridium botulinum (strain Langeland / NCTC 10281 / Type F).